A 215-amino-acid polypeptide reads, in one-letter code: Large ribosomal subunit protein uL3 (215 aa).

A disordered region spans residues 136–155 (GVSISHRSHGSTGQRQDPGK). Gln-151 is subject to N5-methylglutamine.

It belongs to the universal ribosomal protein uL3 family. In terms of assembly, part of the 50S ribosomal subunit. Forms a cluster with proteins L14 and L19. In terms of processing, methylated by PrmB.

Functionally, one of the primary rRNA binding proteins, it binds directly near the 3'-end of the 23S rRNA, where it nucleates assembly of the 50S subunit. The chain is Large ribosomal subunit protein uL3 from Rickettsia canadensis (strain McKiel).